An 833-amino-acid chain; its full sequence is Ventricular zone-expressed PH domain-containing protein homolog 1 (833 aa).

An interaction with TGFBR1 region spans residues 201-319; the sequence is TELLALMSQL…TYLVSQLANM (119 aa). Residues 458 to 505 form a disordered region; it reads KGVGSDDGEDENRGDIPASISLSEIDPLGQGNDKLPFKTDTERSQLGE. The span at 492–502 shows a compositional bias: basic and acidic residues; the sequence is LPFKTDTERSQ. The tract at residues 663–833 is interaction with TGFBR1; that stretch reads ESTFPQQKDL…RESREVTTYL (171 aa). The region spanning 716–819 is the PH domain; sequence QPLIEGKLKE…WLQCINVAVA (104 aa).

It belongs to the MELT/VEPH family. Interacts with TGFBR1.

The protein localises to the cell membrane. Functionally, interacts with TGF-beta receptor type-1 (TGFBR1) and inhibits dissociation of activated SMAD2 from TGFBR1, impeding its nuclear accumulation and resulting in impaired TGF-beta signaling. May also affect FOXO, Hippo and Wnt signaling. The polypeptide is Ventricular zone-expressed PH domain-containing protein homolog 1 (VEPH1) (Homo sapiens (Human)).